Here is an 85-residue protein sequence, read N- to C-terminus: Large ribosomal subunit protein bL27 (85 aa).

A disordered region spans residues 1-21 (MAHKKAGGSTRNGRDSESKRL).

This sequence belongs to the bacterial ribosomal protein bL27 family.

The sequence is that of Large ribosomal subunit protein bL27 from Ectopseudomonas mendocina (strain ymp) (Pseudomonas mendocina).